The chain runs to 351 residues: Probable V-type proton ATPase subunit d (351 aa).

The protein belongs to the V-ATPase V0D/AC39 subunit family. In terms of assembly, V-ATPase is a heteromultimeric enzyme composed of a peripheral catalytic V1 complex (components A to H) attached to an integral membrane V0 proton pore complex (components: a, c, c', c'' and d).

Functionally, subunit of the integral membrane V0 complex of vacuolar ATPase. Vacuolar ATPase is responsible for acidifying a variety of intracellular compartments in eukaryotic cells, thus providing most of the energy required for transport processes in the vacuolar system. The protein is Probable V-type proton ATPase subunit d of Oryza sativa subsp. japonica (Rice).